The primary structure comprises 288 residues: tRNA (guanine-N(1)-)-methyltransferase (288 aa).

Residues 82–105 (ATDAVDTSDPGDSAAPDSSAPSGA) form a disordered region. A compositionally biased stretch (low complexity) spans 89–105 (SDPGDSAAPDSSAPSGA). S-adenosyl-L-methionine-binding positions include glycine 137 and 162-167 (IGDYVL).

This sequence belongs to the RNA methyltransferase TrmD family. As to quaternary structure, homodimer.

It is found in the cytoplasm. The enzyme catalyses guanosine(37) in tRNA + S-adenosyl-L-methionine = N(1)-methylguanosine(37) in tRNA + S-adenosyl-L-homocysteine + H(+). Its function is as follows. Specifically methylates guanosine-37 in various tRNAs. In Bifidobacterium longum (strain DJO10A), this protein is tRNA (guanine-N(1)-)-methyltransferase.